Reading from the N-terminus, the 506-residue chain is ATP synthase subunit alpha, chloroplastic (506 aa).

An ATP-binding site is contributed by 172 to 179 (GDRQTGKT).

It belongs to the ATPase alpha/beta chains family. F-type ATPases have 2 components, CF(1) - the catalytic core - and CF(0) - the membrane proton channel. CF(1) has five subunits: alpha(3), beta(3), gamma(1), delta(1), epsilon(1). CF(0) has four main subunits: a, b, b' and c.

The protein resides in the plastid. Its subcellular location is the chloroplast thylakoid membrane. It carries out the reaction ATP + H2O + 4 H(+)(in) = ADP + phosphate + 5 H(+)(out). Produces ATP from ADP in the presence of a proton gradient across the membrane. The alpha chain is a regulatory subunit. In Pleurastrum terricola (Filamentous green alga), this protein is ATP synthase subunit alpha, chloroplastic.